The chain runs to 370 residues: Metalloproteinase (370 aa).

The N-terminal stretch at 1-15 (MYLAYIFFLFATVSA) is a signal peptide. A Peptidase M12B domain is found at 170–370 (IVIEVLLVTD…DNYGKIFRMF (201 aa)). N226 carries an N-linked (GalNAc...) asparagine glycan. H320 is a binding site for Zn(2+). The active site involves E321. Positions 324 and 330 each coordinate Zn(2+).

The protein belongs to the venom metalloproteinase (M12B) family. In terms of tissue distribution, expressed by the venom gland.

It localises to the secreted. Metalloprotease that may disrupt the cell matrix and the process of clotting blood or hemolymph. This chain is Metalloproteinase, found in Tityus obscurus (Amazonian scorpion).